Here is a 153-residue protein sequence, read N- to C-terminus: Peptide methionine sulfoxide reductase MsrA (153 aa).

C10 is a catalytic residue.

This sequence belongs to the MsrA Met sulfoxide reductase family.

It catalyses the reaction L-methionyl-[protein] + [thioredoxin]-disulfide + H2O = L-methionyl-(S)-S-oxide-[protein] + [thioredoxin]-dithiol. The enzyme catalyses [thioredoxin]-disulfide + L-methionine + H2O = L-methionine (S)-S-oxide + [thioredoxin]-dithiol. Has an important function as a repair enzyme for proteins that have been inactivated by oxidation. Catalyzes the reversible oxidation-reduction of methionine sulfoxide in proteins to methionine. This Methanococcoides burtonii (strain DSM 6242 / NBRC 107633 / OCM 468 / ACE-M) protein is Peptide methionine sulfoxide reductase MsrA.